The sequence spans 568 residues: MGKIKKLPEHVIGKIAAGEVVAGPYSVVKELVENSLDAGATKIEIEIKSGGKSYIKVKDNGEGMGREDLLLSIYEHTTSKINDFDDIYNLSSFGFRGEALASIAKVSRIVITSNNGSESHRLEAIGGKIKSVNEYPLVEKGTIVEVYDLFFNVPARRKFLKSEATEKRYVVEYVEKFLLSNPDVEFIFRADNEIIYNARASNLEERFKLIFPEVKEYTLINGKYVEGIISSPNYHRKNRTGQIFFVQKRFVMDKMLYYIFENGYGEALVDHPYGVLFINVPSKLVDVNVHPQKLEVKFSNPNIIYSDITRTVREALKKFVSKQIFVKPINEKKTKSEVSSFETKNVNFSNDSFQDKFNSVFKESVNHVDYSKNMLFDISEKNLEVKNDVVILKKRYVLFEMEDGIYIMDFHAAHERVIYEQILEKLKVGIEKIDLIIPIEIKVGKSLKQIVIEKLDELKENGFEIKVENESVKILSIPSFIKPSDVDDIFKEIIDEYRIPSMGTKNMKHIIADKACKSAVRTGYDITEGEAKKLIEEVFKRNLTTCPHGRPLFLKITFNEIDKYFDRT.

Belongs to the DNA mismatch repair MutL/HexB family.

This protein is involved in the repair of mismatches in DNA. It is required for dam-dependent methyl-directed DNA mismatch repair. May act as a 'molecular matchmaker', a protein that promotes the formation of a stable complex between two or more DNA-binding proteins in an ATP-dependent manner without itself being part of a final effector complex. This is DNA mismatch repair protein MutL from Thermosipho africanus (strain TCF52B).